Consider the following 281-residue polypeptide: MKRVAIFGHPVIHSRSPLVHGYWLKQHGIAGDYVRHDVAPDEAEAFFARFAEQGYAGGNVTIPHKEVAFNALAEADPVARALGVANTLWLEDGRLFGANTDAPGFLSNLDVTAPGWDANPRVALVLGAGGASRAVLYGFLQRGFDKVLLANRTLARAEALAAHFGPRVVPIGWDGVSASLKEAQVVANTTSLGMKGQPPLDLDLSVLADDAVVADVVYVPLETPLLKAAKARGLRTVDGLGMLLHQAVPGFARWFGVTPQVDAGLRDLIVADLAAKGQLGA.

Shikimate is bound by residues 14–16 (SRS) and threonine 61. Residue lysine 65 is the Proton acceptor of the active site. 2 residues coordinate shikimate: asparagine 86 and aspartate 101. Residues 127–131 (GAGGA), 151–156 (NRTLAR), and valine 216 contribute to the NADP(+) site. Residue tyrosine 218 coordinates shikimate. Glycine 239 contacts NADP(+).

Belongs to the shikimate dehydrogenase family. Homodimer.

It catalyses the reaction shikimate + NADP(+) = 3-dehydroshikimate + NADPH + H(+). It participates in metabolic intermediate biosynthesis; chorismate biosynthesis; chorismate from D-erythrose 4-phosphate and phosphoenolpyruvate: step 4/7. In terms of biological role, involved in the biosynthesis of the chorismate, which leads to the biosynthesis of aromatic amino acids. Catalyzes the reversible NADPH linked reduction of 3-dehydroshikimate (DHSA) to yield shikimate (SA). The sequence is that of Shikimate dehydrogenase (NADP(+)) from Azorhizobium caulinodans (strain ATCC 43989 / DSM 5975 / JCM 20966 / LMG 6465 / NBRC 14845 / NCIMB 13405 / ORS 571).